Here is a 657-residue protein sequence, read N- to C-terminus: Translation factor GUF1, mitochondrial (657 aa).

A mitochondrion-targeting transit peptide spans 1–39; that stretch reads MRGCLQSVKWLTSALRPSQSLASSTRYPRRLLSTSAPRN. The region spanning 59–239 is the tr-type G domain; the sequence is ERFRNFCIVA…TVIEQIPAPV (181 aa). GTP contacts are provided by residues 109–116, 173–177, and 227–230; these read TVKAQTCS, LAFAE, and LLPT.

The protein belongs to the TRAFAC class translation factor GTPase superfamily. Classic translation factor GTPase family. LepA subfamily.

The protein localises to the mitochondrion inner membrane. It carries out the reaction GTP + H2O = GDP + phosphate + H(+). Promotes mitochondrial protein synthesis. May act as a fidelity factor of the translation reaction, by catalyzing a one-codon backward translocation of tRNAs on improperly translocated ribosomes. Binds to mitochondrial ribosomes in a GTP-dependent manner. This Ajellomyces capsulatus (strain NAm1 / WU24) (Darling's disease fungus) protein is Translation factor GUF1, mitochondrial.